The chain runs to 442 residues: UDP-glucosyltransferase 29 (442 aa).

His-20 functions as the Proton acceptor in the catalytic mechanism. His-20 is a binding site for an anthocyanidin. The active-site Charge relay is Asp-116. UDP-alpha-D-glucose contacts are provided by Thr-138, Ala-318, Gln-320, His-335, Trp-338, Ser-340, Glu-343, Asp-359, and Gln-360.

Belongs to the UDP-glycosyltransferase family. Expressed at higher levels in roots than in leaves.

It catalyses the reaction (20S)-ginsenoside F2 + UDP-alpha-D-glucose = (20S)-ginsenoside Rd + UDP + H(+). It carries out the reaction (20S)-ginsenoside Rh2 + UDP-alpha-D-glucose = (20S)-ginsenoside Rg3 + UDP + H(+). It participates in secondary metabolite biosynthesis; terpenoid biosynthesis. Its function is as follows. Component of the dammarane-type triterpene saponins (e.g. PPD-type ginsenosides or panaxosides) biosynthetic pathway. Glycosyltransferase that catalyzes the conversion of ginsenoside Rh2 to ginsenoside Rg3. Triggers the biosynthesis of ginsenoside Rd from ginsenoside F2. This chain is UDP-glucosyltransferase 29, found in Panax ginseng (Korean ginseng).